A 463-amino-acid chain; its full sequence is uncharacterized protein (463 aa).

A signal peptide spans 1 to 23 (MKFSSIPIASTLLSLLVASSVTA). 2 disordered regions span residues 174-200 (STYNSTTSSYHNSTSTPPPTITSTKAS) and 239-258 (GASTVTSTQPSTVTSTQRKN).

This sequence belongs to the but2 family.

It localises to the cytoplasm. This is an uncharacterized protein from Schizosaccharomyces pombe (strain 972 / ATCC 24843) (Fission yeast).